The primary structure comprises 367 residues: Transcription factor aptf-2 (367 aa).

A disordered region spans residues 29-49 (VPATKETGPSSSAECSTQPAV). A compositionally biased stretch (polar residues) spans 36 to 47 (GPSSSAECSTQP). Positions 220–354 (AKQKAFPNKV…GVASELRRLT (135 aa)) are H-S-H (helix-span-helix), dimerization.

This sequence belongs to the AP-2 family. In terms of assembly, binds DNA as a dimer.

Its subcellular location is the nucleus. The protein localises to the cytoplasm. Its function is as follows. Sequence-specific DNA-binding protein that interacts with enhancer elements to regulate transcription of selected genes. Required for neuroblast and epidermal morphogenesis, perhaps acting in cooperation with transcription factor aptf-4. The chain is Transcription factor aptf-2 from Caenorhabditis elegans.